The primary structure comprises 88 residues: Large ribosomal subunit protein bL31B (88 aa).

Belongs to the bacterial ribosomal protein bL31 family. Type B subfamily. As to quaternary structure, part of the 50S ribosomal subunit.

The sequence is that of Large ribosomal subunit protein bL31B from Leuconostoc citreum (strain KM20).